The chain runs to 243 residues: Orotidine 5'-phosphate decarboxylase (243 aa).

Residues Asp16, Lys38, 65–74 (DLKLHDIPNT), Thr120, Arg181, Gln190, Gly210, and Arg211 each bind substrate. The active-site Proton donor is Lys67.

It belongs to the OMP decarboxylase family. Type 1 subfamily. As to quaternary structure, homodimer.

The enzyme catalyses orotidine 5'-phosphate + H(+) = UMP + CO2. It participates in pyrimidine metabolism; UMP biosynthesis via de novo pathway; UMP from orotate: step 2/2. Catalyzes the decarboxylation of orotidine 5'-monophosphate (OMP) to uridine 5'-monophosphate (UMP). The sequence is that of Orotidine 5'-phosphate decarboxylase from Bradyrhizobium sp. (strain BTAi1 / ATCC BAA-1182).